Here is a 215-residue protein sequence, read N- to C-terminus: UPF0056 membrane protein YhcE (215 aa).

6 consecutive transmembrane segments (helical) span residues 14–34, 54–74, 81–101, 120–140, 147–167, and 189–209; these read FFIGLFALVNPVGIIPVFISM, VAIILWISLFLGDTILQLFGI, IAGGILVVTIAMSMISGKLGE, VVPLALPLMAGPGAISSTIVW, ISYLFGFFVAIALFALCCWGL, and IMGLLLMALGIEFIVTGIKGI.

The protein belongs to the UPF0056 (MarC) family.

The protein localises to the cell membrane. The sequence is that of UPF0056 membrane protein YhcE (ychE) from Escherichia coli (strain K12).